A 1498-amino-acid chain; its full sequence is Rap guanine nucleotide exchange factor 2 (1498 aa).

Disordered stretches follow at residues 40-59 and 68-101; these read HVSSSHSGCSITSDSGSSSL and SEAGDMDLSGLPETAVDSEDDDDEEDIERASDPL. The segment covering 83 to 94 has biased composition (acidic residues); the sequence is VDSEDDDDEEDI. 135–252 serves as a coordination point for a nucleoside 3',5'-cyclic phosphate; the sequence is AFANMTMSVR…QKVEEEGEIV (118 aa). The N-terminal Ras-GEF domain occupies 267–380; it reads KGHIVIKGTS…RLLNIACAAK (114 aa). The 84-residue stretch at 385-468 folds into the PDZ domain; it reads LMTLTKPSRE…LSITVKTNLF (84 aa). Phosphoserine is present on Ser501. The 87-residue stretch at 606 to 692 folds into the Ras-associating domain; the sequence is PDQVLRVFKA…GRYYLKNNME (87 aa). Phosphothreonine is present on Thr644. Residues 717–944 enclose the Ras-GEF domain; it reads STVEVATQLS…SQGSTNATVL (228 aa). A phosphoserine mark is found at Ser806, Ser930, Ser933, Ser1022, Ser1079, Ser1088, Ser1094, Ser1115, Ser1119, Ser1158, and Ser1175. The interval 1002–1048 is disordered; sequence PATNTLPKNPGDKKPVKSETSPVAPRAGSQQKAQAQPPPPQPQPQHK. The interval 1094-1159 is disordered; sequence SLERHKKQAE…RSSIVSNSSF (66 aa). Composition is skewed to low complexity over residues 1110–1124 and 1140–1159; these read SSQLSSPPTSPQSSP and SDSGHSEISSRSSIVSNSSF. Disordered regions lie at residues 1224–1257, 1304–1371, and 1392–1498; these read STEELSQDQGDRASLDAADSGRGSWTSCSSGSHD, TKYN…TKPV, and EGRY…VSAV. 2 stretches are compositionally biased toward polar residues: residues 1246 to 1257 and 1306 to 1330; these read GSWTSCSSGSHD and YNRQNQSRESLEQAQSRASWASSTG. The span at 1354 to 1365 shows a compositional bias: low complexity; sequence EAESSSVTSVTT. The span at 1487–1498 shows a compositional bias: acidic residues; it reads TEEDEDEQVSAV.

It belongs to the RAPGEF2 family. As to quaternary structure, found in a complex, at least composed of KIDINS220, MAGI2, NTRK1 and RAPGEF2; the complex is mainly formed at late endosomes in a neuronal growth factor (NGF)-dependent manner. Interacts (via C-terminal domain) with NEDD4 (via WW domains); this interaction leads to ubiquitination and degradation via the proteasome pathway in a cAMP-independent manner. Interacts with MAGI1 (via PDZ domain). Interacts with ADRB1 (via C-terminal PDZ motif); the interaction is direct. Interacts (via Ras-associating domain) with RAP1A (via GTP-bound active form). Interacts weakly with HRAS (via GDP- and GTP-bound forms). Interacts (via C-terminal domain) with MAGI2 (via PDZ and WW domains). Interacts with CDH1, CTNNB1 and TJP1. Post-translationally, ubiquitinated by NEDD4, leading to proteasomal degradation. In terms of processing, phosphorylation by PLK2 promotes its activity.

Its subcellular location is the cell junction. It is found in the cytoplasm. It localises to the perinuclear region. The protein resides in the cell membrane. The protein localises to the late endosome. Functions as a guanine nucleotide exchange factor (GEF), which activates Rap and Ras family of small GTPases by exchanging bound GDP for free GTP in a cAMP-dependent manner. Serves as a link between cell surface receptors and Rap/Ras GTPases in intracellular signaling cascades. Also acts as an effector for Rap1 by direct association with Rap1-GTP thereby leading to the amplification of Rap1-mediated signaling. Shows weak activity on HRAS. It is controversial whether RAPGEF2 binds cAMP and cGMP or not. Its binding to ligand-activated beta-1 adrenergic receptor ADRB1 leads to the Ras activation through the G(s)-alpha signaling pathway. Involved in the cAMP-induced Ras and Erk1/2 signaling pathway that leads to sustained inhibition of long term melanogenesis by reducing dendrite extension and melanin synthesis. Also provides inhibitory signals for cell proliferation of melanoma cells and promotes their apoptosis in a cAMP-independent nanner. Regulates cAMP-induced neuritogenesis by mediating the Rap1/B-Raf/ERK signaling through a pathway that is independent on both PKA and RAPGEF3/RAPGEF4. Involved in neuron migration and in the formation of the major forebrain fiber connections forming the corpus callosum, the anterior commissure and the hippocampal commissure during brain development. Involved in neuronal growth factor (NGF)-induced sustained activation of Rap1 at late endosomes and in brain-derived neurotrophic factor (BDNF)-induced axon outgrowth of hippocampal neurons. Plays a role in the regulation of embryonic blood vessel formation and in the establishment of basal junction integrity and endothelial barrier function. May be involved in the regulation of the vascular endothelial growth factor receptor KDR and cadherin CDH5 expression at allantois endothelial cell-cell junctions. The chain is Rap guanine nucleotide exchange factor 2 (RAPGEF2) from Canis lupus familiaris (Dog).